Here is a 103-residue protein sequence, read N- to C-terminus: Large ribosomal subunit protein bL21 (103 aa).

The protein belongs to the bacterial ribosomal protein bL21 family. Part of the 50S ribosomal subunit. Contacts protein L20.

This protein binds to 23S rRNA in the presence of protein L20. The chain is Large ribosomal subunit protein bL21 from Escherichia coli O127:H6 (strain E2348/69 / EPEC).